Here is a 274-residue protein sequence, read N- to C-terminus: Hydroxyethylthiazole kinase (274 aa).

Substrate is bound at residue Met49. The ATP site is built by Arg125 and Thr173. Gly200 contributes to the substrate binding site.

Belongs to the Thz kinase family. Requires Mg(2+) as cofactor.

The enzyme catalyses 5-(2-hydroxyethyl)-4-methylthiazole + ATP = 4-methyl-5-(2-phosphooxyethyl)-thiazole + ADP + H(+). It functions in the pathway cofactor biosynthesis; thiamine diphosphate biosynthesis; 4-methyl-5-(2-phosphoethyl)-thiazole from 5-(2-hydroxyethyl)-4-methylthiazole: step 1/1. Functionally, catalyzes the phosphorylation of the hydroxyl group of 4-methyl-5-beta-hydroxyethylthiazole (THZ). This chain is Hydroxyethylthiazole kinase, found in Desulfosudis oleivorans (strain DSM 6200 / JCM 39069 / Hxd3) (Desulfococcus oleovorans).